The following is a 211-amino-acid chain: uncharacterized protein (211 aa).

The protein belongs to the nucleoside deoxyribosyltransferase family.

The protein localises to the cytoplasm. It localises to the nucleus. This is an uncharacterized protein from Schizosaccharomyces pombe (strain 972 / ATCC 24843) (Fission yeast).